Consider the following 620-residue polypeptide: 1-deoxy-D-xylulose-5-phosphate synthase (620 aa).

Residues His-80 and 121–123 (GHS) contribute to the thiamine diphosphate site. Asp-152 provides a ligand contact to Mg(2+). Residues 153–154 (GA), Asn-181, Tyr-288, and Glu-370 each bind thiamine diphosphate. Position 181 (Asn-181) interacts with Mg(2+).

The protein belongs to the transketolase family. DXPS subfamily. Homodimer. Mg(2+) is required as a cofactor. The cofactor is thiamine diphosphate.

The catalysed reaction is D-glyceraldehyde 3-phosphate + pyruvate + H(+) = 1-deoxy-D-xylulose 5-phosphate + CO2. It participates in metabolic intermediate biosynthesis; 1-deoxy-D-xylulose 5-phosphate biosynthesis; 1-deoxy-D-xylulose 5-phosphate from D-glyceraldehyde 3-phosphate and pyruvate: step 1/1. Functionally, catalyzes the acyloin condensation reaction between C atoms 2 and 3 of pyruvate and glyceraldehyde 3-phosphate to yield 1-deoxy-D-xylulose-5-phosphate (DXP). The chain is 1-deoxy-D-xylulose-5-phosphate synthase from Shigella dysenteriae serotype 1 (strain Sd197).